Reading from the N-terminus, the 205-residue chain is Cbp/p300-interacting transactivator 3 (205 aa).

Belongs to the CITED family.

It localises to the nucleus. Its function is as follows. Acts as a transcriptional coactivator. Enhances estrogen-dependent transactivation mediated by estrogen receptors. In Gallus gallus (Chicken), this protein is Cbp/p300-interacting transactivator 3 (CITED3).